The chain runs to 231 residues: Flagellar L-ring protein (231 aa).

The first 18 residues, 1-18 (MNRLMIVSLLGIATALGG), serve as a signal peptide directing secretion. C19 is lipidated: N-palmitoyl cysteine. C19 carries S-diacylglycerol cysteine lipidation. A disordered region spans residues 118–141 (LSLSAEYGGSRDAKGDSQAGQSNS).

It belongs to the FlgH family. The basal body constitutes a major portion of the flagellar organelle and consists of four rings (L,P,S, and M) mounted on a central rod.

It is found in the cell outer membrane. The protein resides in the bacterial flagellum basal body. Its function is as follows. Assembles around the rod to form the L-ring and probably protects the motor/basal body from shearing forces during rotation. In Pseudomonas aeruginosa (strain LESB58), this protein is Flagellar L-ring protein.